Consider the following 557-residue polypeptide: Dihydroxy-acid dehydratase (557 aa).

C49 lines the [2Fe-2S] cluster pocket. Residue D81 coordinates Mg(2+). Position 122 (C122) interacts with [2Fe-2S] cluster. D123 and K124 together coordinate Mg(2+). At K124 the chain carries N6-carboxylysine. [2Fe-2S] cluster is bound at residue C194. Residue E446 participates in Mg(2+) binding. The Proton acceptor role is filled by S472.

This sequence belongs to the IlvD/Edd family. As to quaternary structure, homodimer. The cofactor is [2Fe-2S] cluster. It depends on Mg(2+) as a cofactor.

The catalysed reaction is (2R)-2,3-dihydroxy-3-methylbutanoate = 3-methyl-2-oxobutanoate + H2O. It carries out the reaction (2R,3R)-2,3-dihydroxy-3-methylpentanoate = (S)-3-methyl-2-oxopentanoate + H2O. It functions in the pathway amino-acid biosynthesis; L-isoleucine biosynthesis; L-isoleucine from 2-oxobutanoate: step 3/4. The protein operates within amino-acid biosynthesis; L-valine biosynthesis; L-valine from pyruvate: step 3/4. Its function is as follows. Functions in the biosynthesis of branched-chain amino acids. Catalyzes the dehydration of (2R,3R)-2,3-dihydroxy-3-methylpentanoate (2,3-dihydroxy-3-methylvalerate) into 2-oxo-3-methylpentanoate (2-oxo-3-methylvalerate) and of (2R)-2,3-dihydroxy-3-methylbutanoate (2,3-dihydroxyisovalerate) into 2-oxo-3-methylbutanoate (2-oxoisovalerate), the penultimate precursor to L-isoleucine and L-valine, respectively. This Prochlorococcus marinus (strain AS9601) protein is Dihydroxy-acid dehydratase.